A 207-amino-acid chain; its full sequence is Guanylate kinase (207 aa).

The region spanning 6–185 is the Guanylate kinase-like domain; it reads GLLIVLSGPS…AKNRIQSIVE (180 aa). 13–20 contributes to the ATP binding site; that stretch reads GPSGVGKG.

Belongs to the guanylate kinase family.

It localises to the cytoplasm. The enzyme catalyses GMP + ATP = GDP + ADP. Functionally, essential for recycling GMP and indirectly, cGMP. This Staphylococcus epidermidis (strain ATCC 12228 / FDA PCI 1200) protein is Guanylate kinase.